The following is a 396-amino-acid chain: Mevalonate kinase (396 aa).

ATP is bound by residues K13, N55, S135, and 140–146 (GAGLGSS). Catalysis depends on S146, which acts as the Proton donor. Positions 146 and 193 each coordinate Mg(2+). Catalysis depends on D204, which acts as the Proton acceptor.

Belongs to the GHMP kinase family. Mevalonate kinase subfamily. As to quaternary structure, homodimer. Mg(2+) is required as a cofactor.

Its subcellular location is the cytoplasm. The protein resides in the peroxisome. It catalyses the reaction (R)-mevalonate + ATP = (R)-5-phosphomevalonate + ADP + H(+). It participates in isoprenoid biosynthesis; isopentenyl diphosphate biosynthesis via mevalonate pathway; isopentenyl diphosphate from (R)-mevalonate: step 1/3. Its activity is regulated as follows. Farnesyl pyrophosphate and geranyl pyrophosphate inhibit mevalonate kinase activity by binding competitively at the ATP-binding sites. Functionally, catalyzes the phosphorylation of mevalonate to mevalonate 5-phosphate, a key step in isoprenoid and cholesterol biosynthesis. The sequence is that of Mevalonate kinase from Bos taurus (Bovine).